The following is a 357-amino-acid chain: Intracellular hyaluronan-binding protein 4 (357 aa).

Disordered stretches follow at residues V56–A116, E150–F186, and P313–T357. Positions P96–T115 are enriched in basic and acidic residues. Positions C155 to I171 are enriched in gly residues. The segment covering D176 to F186 has biased composition (basic and acidic residues). Positions D348–T357 are enriched in acidic residues.

This sequence belongs to the SERBP1-HABP4 family. Associates with ribosomes; promoting ribosome stabilization. Interacts with EEF2/eEF2; promoting ribosome stabilization.

It localises to the nucleus. Its subcellular location is the cytoplasm. The protein localises to the stress granule. It is found in the sarcoplasm. The protein resides in the nuclear body. It localises to the nucleolus. Its subcellular location is the nucleus speckle. The protein localises to the cajal body. It is found in the gem. In terms of biological role, ribosome-binding protein that promotes ribosome hibernation, a process during which ribosomes are stabilized in an inactive state and preserved from proteasomal degradation. Acts via its association with EEF2/eEF2 factor at the A-site of the ribosome, promoting ribosome stabilization in an inactive state compatible with storage. Plays a key role in ribosome hibernation in the mature egg by promoting ribosome stabilization. Ribosomes, which are produced in large quantities during oogenesis, are stored and translationally repressed in the egg and early embryo. The polypeptide is Intracellular hyaluronan-binding protein 4 (Gallus gallus (Chicken)).